A 30-amino-acid chain; its full sequence is Trypsin inhibitor 3 (30 aa).

Residue glutamine 1 is modified to Pyrrolidone carboxylic acid. Intrachain disulfides connect cysteine 4/cysteine 21, cysteine 11/cysteine 23, and cysteine 17/cysteine 29.

The protein resides in the secreted. Functionally, inhibits trypsin; probably participates in a plant defense mechanism. In Momordica cochinchinensis (Spiny bitter cucumber), this protein is Trypsin inhibitor 3.